Consider the following 349-residue polypeptide: tRNA pseudouridine synthase D (349 aa).

Phe-27 provides a ligand contact to substrate. Asp-80 functions as the Nucleophile in the catalytic mechanism. Residue Asn-129 coordinates substrate. One can recognise a TRUD domain in the interval 155–303 (GVPNYFGAQR…VEAARRAMLL (149 aa)). Residue Phe-329 coordinates substrate.

The protein belongs to the pseudouridine synthase TruD family.

It carries out the reaction uridine(13) in tRNA = pseudouridine(13) in tRNA. Functionally, responsible for synthesis of pseudouridine from uracil-13 in transfer RNAs. The sequence is that of tRNA pseudouridine synthase D from Escherichia coli O7:K1 (strain IAI39 / ExPEC).